The primary structure comprises 269 residues: G-protein coupled receptor homolog C3 (269 aa).

Cysteines 28 and 107 form a disulfide. Transmembrane regions (helical) follow at residues 30 to 50 (IMSV…TLMS), 71 to 91 (IGIL…SPVS), 123 to 143 (LMQI…FVYC), 165 to 185 (IVLM…IVLM), and 200 to 220 (HLCL…ISLA).

It belongs to the G-protein coupled receptor 1 family.

The protein localises to the host cell membrane. This is G-protein coupled receptor homolog C3 from Sus scrofa (Pig).